We begin with the raw amino-acid sequence, 121 residues long: UPF0102 protein BT_2236 (121 aa).

Belongs to the UPF0102 family.

The polypeptide is UPF0102 protein BT_2236 (Bacteroides thetaiotaomicron (strain ATCC 29148 / DSM 2079 / JCM 5827 / CCUG 10774 / NCTC 10582 / VPI-5482 / E50)).